The sequence spans 275 residues: Elongation factor Ts (275 aa).

Positions 76–79 (TDFV) are involved in Mg(2+) ion dislocation from EF-Tu.

This sequence belongs to the EF-Ts family.

It localises to the cytoplasm. In terms of biological role, associates with the EF-Tu.GDP complex and induces the exchange of GDP to GTP. It remains bound to the aminoacyl-tRNA.EF-Tu.GTP complex up to the GTP hydrolysis stage on the ribosome. In Corynebacterium kroppenstedtii (strain DSM 44385 / JCM 11950 / CIP 105744 / CCUG 35717), this protein is Elongation factor Ts.